We begin with the raw amino-acid sequence, 368 residues long: Probable endopolygalacturonase I (368 aa).

An N-terminal signal peptide occupies residues 1–18 (MHSFQLLGLAALGSLVAA). The propeptide occupies 19-31 (APSPSRVSDLTER). C35 and C50 are disulfide-bonded. PbH1 repeat units lie at residues 162 to 192 (ANNLHLTDITIDNSDGDSKGGHNTDGFDISE), 193 to 214 (SNGVYISGANVKNQDDCIAINS), 215 to 235 (GKNIEFTGGTCSGGHGLSIGS), 244 to 265 (VQGVKITDSTVTNSDNGIRIKT), 273 to 295 (VSDVTYSNIKLSGIHKKGIVIQQ), and 307 to 328 (SNGIPIKDVTVDGITGSVDSKA). Residue D207 is the Proton donor of the active site. C209 and C225 are oxidised to a cystine. H229 is a catalytic residue. Cystine bridges form between C335-C340 and C359-C368.

It belongs to the glycosyl hydrolase 28 family.

It localises to the secreted. The enzyme catalyses (1,4-alpha-D-galacturonosyl)n+m + H2O = (1,4-alpha-D-galacturonosyl)n + (1,4-alpha-D-galacturonosyl)m.. Involved in maceration and soft-rotting of plant tissue. Hydrolyzes the 1,4-alpha glycosidic bonds of de-esterified pectate in the smooth region of the plant cell wall. This is Probable endopolygalacturonase I (pgaI) from Aspergillus terreus (strain NIH 2624 / FGSC A1156).